The chain runs to 436 residues: Transcriptional regulator VdtR (436 aa).

The zn(2)-C6 fungal-type DNA-binding region spans 17–44 (CDRCSANKVKCTQEKPECERCRLLSLPC). Disordered regions lie at residues 51 to 147 (RIGK…HDKG) and 173 to 192 (TARE…EYSD). Over residues 125-141 (SHNSNRPTNMASTNQDQ) the composition is skewed to polar residues. A compositionally biased stretch (basic and acidic residues) spans 174–192 (AREDQKQHPELRSEEEYSD).

Its subcellular location is the nucleus. In terms of biological role, transcription factor that regulates expression of the viriditoxin biosynthesis cluster and viriditoxin synthesis. The sequence is that of Transcriptional regulator VdtR from Byssochlamys spectabilis (Paecilomyces variotii).